Reading from the N-terminus, the 92-residue chain is MAFIKRDNKNKKRFQQQNPLFKRKRFCRFTVAGVEQIDYKDLDTLKDFIGDNGKITPARLTGTKAHYQRQLDTAIKRARFLALMPYTDLHKN.

Belongs to the bacterial ribosomal protein bS18 family. In terms of assembly, part of the 30S ribosomal subunit. Forms a tight heterodimer with protein bS6.

Binds as a heterodimer with protein bS6 to the central domain of the 16S rRNA, where it helps stabilize the platform of the 30S subunit. This Cupriavidus pinatubonensis (strain JMP 134 / LMG 1197) (Cupriavidus necator (strain JMP 134)) protein is Small ribosomal subunit protein bS18A.